Reading from the N-terminus, the 310-residue chain is MAITKGNKIVLVGTGAVGSSYAYALMNQGISDELILVDLNEEKAKGDVLDLNHSIVYAPSPMEIKFGSYEDCKDAALVVICAGAAQKPGETRLDLVHKNVGIFESIVGNIMKSGFNGIFLVATNPVDILAYATWKFSGLPKERVIGSGTVLDTARFRYLLGEEMNAAPTSVHGYIIGEHGDSQLPVWSSATIAGTPIAPRLTDEKKQEIAENVRDAAYKIIEAKGATYYGIATGLARITRAILKNENVVLPVGTLLEGENGHDDVYIGVPAIINREGVRQVVELSLNDEEKEKFARSVETLKDIQAAIWS.

NAD(+)-binding positions include valine 17, aspartate 38, lysine 43, tyrosine 69, and 83 to 84 (GA). Glutamine 86 and arginine 92 together coordinate substrate. NAD(+) contacts are provided by residues serine 105, 122–124 (ATN), and serine 147. Residue 124–127 (NPVD) participates in substrate binding. 152–155 (DTAR) contacts substrate. 2 residues coordinate beta-D-fructose 1,6-bisphosphate: arginine 157 and histidine 172. The active-site Proton acceptor is the histidine 179. Tyrosine 218 carries the phosphotyrosine modification. Position 227 (threonine 227) interacts with substrate.

It belongs to the LDH/MDH superfamily. LDH family. As to quaternary structure, homotetramer.

The protein localises to the cytoplasm. It catalyses the reaction (S)-lactate + NAD(+) = pyruvate + NADH + H(+). It participates in fermentation; pyruvate fermentation to lactate; (S)-lactate from pyruvate: step 1/1. With respect to regulation, allosterically activated by fructose 1,6-bisphosphate (FBP). Catalyzes the conversion of lactate to pyruvate. The protein is L-lactate dehydrogenase of Halalkalibacterium halodurans (strain ATCC BAA-125 / DSM 18197 / FERM 7344 / JCM 9153 / C-125) (Bacillus halodurans).